A 180-amino-acid polypeptide reads, in one-letter code: Sperm protein associated with the nucleus on the X chromosome N2 (180 aa).

2 disordered regions span residues 1–46 and 64–180; these read MEQP…KTKT and NSNQ…GGED. The span at 10-26 shows a compositional bias: basic and acidic residues; it reads GEKRKSPCESNNKKNDE. A compositionally biased stretch (acidic residues) spans 82–169; that stretch reads QEEEDEGLDS…SSQEDEDLDS (88 aa). Over residues 170–180 the composition is skewed to low complexity; sequence SEGSSQEGGED.

This sequence belongs to the SPAN-X family.

In Homo sapiens (Human), this protein is Sperm protein associated with the nucleus on the X chromosome N2 (SPANXN2).